The sequence spans 216 residues: 3-isopropylmalate dehydratase small subunit 2 (216 aa).

Belongs to the LeuD family. LeuD type 1 subfamily. Heterodimer of LeuC and LeuD.

It carries out the reaction (2R,3S)-3-isopropylmalate = (2S)-2-isopropylmalate. The protein operates within amino-acid biosynthesis; L-leucine biosynthesis; L-leucine from 3-methyl-2-oxobutanoate: step 2/4. Functionally, catalyzes the isomerization between 2-isopropylmalate and 3-isopropylmalate, via the formation of 2-isopropylmaleate. In Bordetella pertussis (strain Tohama I / ATCC BAA-589 / NCTC 13251), this protein is 3-isopropylmalate dehydratase small subunit 2.